Reading from the N-terminus, the 180-residue chain is Type IV major pilin protein PilE1 (180 aa).

Residues 1–7 (MNTLQKG) constitute a propeptide that is removed on maturation. Position 8 is an N-methylphenylalanine (Phe-8). A helical transmembrane segment spans residues 8 to 28 (FTLIELMIVIAIVGILAAVAL). O-linked (GlcNAc...) serine glycosylation occurs at Ser-70. Cys-128 and Cys-160 are joined by a disulfide.

The protein belongs to the N-Me-Phe pilin family. The pili are polar flexible filaments of about 5.4 nanometers diameter and 2.5 micrometers average length; they consist of only a single polypeptide chain arranged in a helical configuration of five subunits per turn in the assembled pilus.

The protein localises to the fimbrium. It localises to the membrane. Its function is as follows. Major component of the type IV pilus (T4P) that plays a role in cellular adherence, microcolony formation, resistance to neutrophil mediated killing, twitching motility as well as transformation. Mediates the attachment and the formation of bacterial microcolonies on host epithelial cells. Mechanistically, pili retractation induces host NF-kappa-B activation in infected cells, which is temporally associated with the formation of gonococcal microcolonies. The polypeptide is Type IV major pilin protein PilE1 (pilE1) (Neisseria gonorrhoeae).